The following is a 161-amino-acid chain: Large ribosomal subunit protein uL10 (161 aa).

It belongs to the universal ribosomal protein uL10 family. As to quaternary structure, part of the ribosomal stalk of the 50S ribosomal subunit. The N-terminus interacts with L11 and the large rRNA to form the base of the stalk. The C-terminus forms an elongated spine to which L12 dimers bind in a sequential fashion forming a multimeric L10(L12)X complex.

Its function is as follows. Forms part of the ribosomal stalk, playing a central role in the interaction of the ribosome with GTP-bound translation factors. This Mycoplasma pneumoniae (strain ATCC 29342 / M129 / Subtype 1) (Mycoplasmoides pneumoniae) protein is Large ribosomal subunit protein uL10 (rplJ).